The primary structure comprises 310 residues: Oxygen-dependent coproporphyrinogen-III oxidase (310 aa).

Substrate is bound at residue S97. The a divalent metal cation site is built by H101 and H111. Residue H111 is the Proton donor of the active site. Position 113-115 (113-115 (NFR)) interacts with substrate. Residues H150 and H180 each coordinate a divalent metal cation. Residues 245 to 280 (YVEFNLLYDRGTRFGLEFGGRTESILMSLPPRVVWR) are important for dimerization. 263 to 265 (GGR) contributes to the substrate binding site.

It belongs to the aerobic coproporphyrinogen-III oxidase family. Homodimer. Requires a divalent metal cation as cofactor.

It is found in the cytoplasm. It catalyses the reaction coproporphyrinogen III + O2 + 2 H(+) = protoporphyrinogen IX + 2 CO2 + 2 H2O. Its pathway is porphyrin-containing compound metabolism; protoporphyrin-IX biosynthesis; protoporphyrinogen-IX from coproporphyrinogen-III (O2 route): step 1/1. Functionally, involved in the heme biosynthesis. Catalyzes the aerobic oxidative decarboxylation of propionate groups of rings A and B of coproporphyrinogen-III to yield the vinyl groups in protoporphyrinogen-IX. This chain is Oxygen-dependent coproporphyrinogen-III oxidase, found in Coxiella burnetii (strain RSA 493 / Nine Mile phase I).